A 177-amino-acid polypeptide reads, in one-letter code: Bifunctional protein PyrR (177 aa).

The PRPP-binding motif lies at 97 to 109; it reads IILVDDVLYTGRT.

The protein belongs to the purine/pyrimidine phosphoribosyltransferase family. PyrR subfamily.

It carries out the reaction UMP + diphosphate = 5-phospho-alpha-D-ribose 1-diphosphate + uracil. Regulates the transcription of the pyrimidine nucleotide (pyr) operon in response to exogenous pyrimidines. Functionally, also displays a weak uracil phosphoribosyltransferase activity which is not physiologically significant. The protein is Bifunctional protein PyrR of Nitrosococcus oceani (strain ATCC 19707 / BCRC 17464 / JCM 30415 / NCIMB 11848 / C-107).